Here is a 302-residue protein sequence, read N- to C-terminus: Putative peptide permease protein BMEII0861 (302 aa).

Residues 1-22 (MRSSIHASRLRKMGQSIPASTG) form a disordered region. The next 5 membrane-spanning stretches (helical) occupy residues 38-58 (IFGL…PLWL), 101-121 (LLVA…IGAI), 147-167 (IFLL…VVVI), 230-250 (ILLE…AASW), and 268-288 (WQWL…NFIG). Residues 97 to 288 (GRISLLVAVS…LAVLAINFIG (192 aa)) form the ABC transmembrane type-1 domain.

It belongs to the binding-protein-dependent transport system permease family. As to quaternary structure, the complex is composed of two ATP-binding proteins (BMEII0863 and BMEII0864), two transmembrane proteins (BMEII0860 and BMEII0861) and a solute-binding protein (BMEII0859).

It localises to the cell inner membrane. In terms of biological role, probably part of an ABC transporter complex that could be involved in peptide import. Probably responsible for the translocation of the substrate across the membrane. The chain is Putative peptide permease protein BMEII0861 from Brucella melitensis biotype 1 (strain ATCC 23456 / CCUG 17765 / NCTC 10094 / 16M).